A 223-amino-acid chain; its full sequence is UPF0758 protein Tgr7_0100 (223 aa).

Positions 102–223 (ALTSPDDTRR…LVSFAERGLL (122 aa)) constitute an MPN domain. 3 residues coordinate Zn(2+): H173, H175, and D186. The JAMM motif motif lies at 173 to 186 (HNHPSGVAEPSRSD).

This sequence belongs to the UPF0758 family.

This is UPF0758 protein Tgr7_0100 from Thioalkalivibrio sulfidiphilus (strain HL-EbGR7).